A 318-amino-acid chain; its full sequence is (1S)-1,7-diacetoxy-luvungin A aldo-keto reductase (318 aa).

Tyr54 (proton donor) is an active-site residue.

It belongs to the aldo/keto reductase family. As to expression, expressed in flowers, maturing fruits and in juice vesicles.

It carries out the reaction (1S)-1,7-diacetoxy-luvungin A + AH2 + H2O = (1R,2R,3S,8R,10R,11R,15S,16S)-3-(acetyloxy)-15-[(4R)-4-[(2S)-3,3-dimethyloxiran-2-yl]-1,4-dihydroxybutan-2-yl]-2,7,7,11,16-pentamethyl-5-oxo-6-oxatetracyclo[9.7.0.0(2,8).0(12,16)]octadec-12-en-10-yl acetate + acetate + A + H(+). It functions in the pathway secondary metabolite biosynthesis; terpenoid biosynthesis. Aldo-keto reductase involved in the biosynthesis of limonoids triterpene natural products such as limonin, a compound with insecticidal activity responsible for the bitter taste in citrus. Can use (1S)-1,7-diacetoxy-luvungin A as substrate. This is (1S)-1,7-diacetoxy-luvungin A aldo-keto reductase from Citrus sinensis (Sweet orange).